Reading from the N-terminus, the 547-residue chain is Signal recognition particle receptor subunit alpha homolog (547 aa).

The interval 124–174 (LENETDTKSLPVEANNDNSARKKNEYEMKKKGAQSKQTNAPKKGKKQLRKW) is disordered. The span at 142 to 153 (SARKKNEYEMKK) shows a compositional bias: basic and acidic residues. Residues 343–546 (YTISLIGVNG…SVDWVVDQLM (204 aa)) form an NG domain region. Residues 349–356 (GVNGVGKS), 437–441 (DTAGR), and 498–501 (SKVD) each bind GTP.

This sequence belongs to the GTP-binding SRP family. In terms of assembly, heterodimer of an alpha and a beta chain.

Its subcellular location is the endoplasmic reticulum membrane. Functionally, component of the SRP (signal recognition particle) receptor (SR). Ensures, in conjunction with the signal recognition particle, the correct targeting of the nascent secretory proteins to the endoplasmic reticulum membrane system. GTP hydrolysis may enhance the fidelity of and provide unidirectionality to the targeting reaction. This Schizosaccharomyces pombe (strain 972 / ATCC 24843) (Fission yeast) protein is Signal recognition particle receptor subunit alpha homolog (srp101).